Consider the following 219-residue polypeptide: Orotate phosphoribosyltransferase (219 aa).

Residue lysine 26 participates in 5-phospho-alpha-D-ribose 1-diphosphate binding. Residue 34-35 (FF) participates in orotate binding. Residues 72–73 (YK), arginine 98, lysine 99, lysine 102, histidine 104, and 124–132 (DDVITAGTA) each bind 5-phospho-alpha-D-ribose 1-diphosphate. 2 residues coordinate orotate: threonine 128 and arginine 156.

The protein belongs to the purine/pyrimidine phosphoribosyltransferase family. PyrE subfamily. In terms of assembly, homodimer. Mg(2+) serves as cofactor.

It catalyses the reaction orotidine 5'-phosphate + diphosphate = orotate + 5-phospho-alpha-D-ribose 1-diphosphate. The protein operates within pyrimidine metabolism; UMP biosynthesis via de novo pathway; UMP from orotate: step 1/2. Its function is as follows. Catalyzes the transfer of a ribosyl phosphate group from 5-phosphoribose 1-diphosphate to orotate, leading to the formation of orotidine monophosphate (OMP). In Xanthomonas campestris pv. campestris (strain 8004), this protein is Orotate phosphoribosyltransferase.